Consider the following 450-residue polypeptide: Protein W (450 aa).

Residues 53–92 (SGESEQVEGGMSKDDGDVERRNLEDLSSTSPTDGTIGKRV) are disordered. Residues 63 to 76 (MSKDDGDVERRNLE) are compositionally biased toward basic and acidic residues. At serine 257 the chain carries Phosphoserine; by host. The disordered stretch occupies residues 265-324 (ISPEDEEPSSVGGKPNESIGRTIEGQSIRDNLQAKDNKSTDVPGAGPKDSAVKEEPPQKR). Serine 350 bears the Phosphoserine; by host mark. Disordered stretches follow at residues 384-403 (VQTADRQRPGTPMPKSRGIP) and 429-450 (PGMFEDHPPTKKARVSMRRMSN). A compositionally biased stretch (basic residues) spans 438 to 450 (TKKARVSMRRMSN). Residues 439 to 442 (KKAR) carry the Nuclear localization signal motif.

In terms of assembly, interacts with host STAT1.

The protein resides in the host nucleus. Prevent the establishment of cellular antiviral state by blocking the interferon-alpha/beta (IFN-alpha/beta). Interacts with host STAT1 protein in the nucleus, blocking it's phosphorylation by IFN-alpha/beta. Also blocks antiviral state induced by Toll-like receptor 3/TLR3 binding to dsRNA. This chain is Protein W (P/V/C), found in Cynopterus brachyotis (Lesser short-nosed fruit bat).